Reading from the N-terminus, the 1418-residue chain is JmjC domain-containing histone demethylation protein 1 (1418 aa).

Disordered regions lie at residues 1-86 (MIGA…SSST), 102-162 (APLS…STFD), and 308-329 (GADRASLDVPPRGDDDTESDEN). Basic and acidic residues predominate over residues 44-60 (WIDRGDSQAASYDRDRV). Residues 61–71 (TSNNDVYSSTN) are compositionally biased toward polar residues. Over residues 127–139 (STERPAKRPRSEK) the composition is skewed to basic and acidic residues. The span at 143-162 (PLHQPQTTVAPDANPSSTFD) shows a compositional bias: polar residues. Residues 308–321 (GADRASLDVPPRGD) show a composition bias toward basic and acidic residues. The segment at 331–391 (QANCAACNLV…KFICRRCRPI (61 aa)) adopts a PHD-type zinc-finger fold. Positions 588–746 (VSQSKLGKLI…MQIKVAKIEK (159 aa)) constitute a JmjC domain. Thr-639 is a binding site for substrate. Fe cation-binding residues include His-642 and Asp-644. Lys-659 serves as a coordination point for substrate. His-714 lines the Fe cation pocket. Disordered stretches follow at residues 891 to 964 (PQWT…TVEI), 1090 to 1118 (NAATSKVHDGSPEGLNTGKKGRSKACDDC), 1130 to 1195 (YGRI…HTQR), and 1250 to 1394 (KPTA…DEPD). Basic and acidic residues predominate over residues 907–925 (LTEKKPAGRPSRRSERNAE). 2 stretches are compositionally biased toward basic and acidic residues: residues 1130–1143 (YGRIDPIKAQERSK) and 1186–1195 (AEGDMSHTQR). The span at 1250–1263 (KPTASLVSPPTSQA) shows a compositional bias: polar residues. Over residues 1341–1352 (SSKKPASRPSSS) the composition is skewed to low complexity.

Belongs to the JHDM1 histone demethylase family. Fe(2+) serves as cofactor.

The protein localises to the nucleus. It catalyses the reaction N(6),N(6)-dimethyl-L-lysyl(36)-[histone H3] + 2 2-oxoglutarate + 2 O2 = L-lysyl(36)-[histone H3] + 2 formaldehyde + 2 succinate + 2 CO2. Histone demethylase that specifically demethylates 'Lys-36' of histone H3, thereby playing a central role in histone code. The protein is JmjC domain-containing histone demethylation protein 1 (jhd1) of Aspergillus fumigatus (strain ATCC MYA-4609 / CBS 101355 / FGSC A1100 / Af293) (Neosartorya fumigata).